The chain runs to 269 residues: Endo-1,3-1,4-beta-glycanase ExoK (269 aa).

The first 29 residues, 1-29 (MTIDRYRRFARLAFIATLPLAGLATAAAA), serve as a signal peptide directing secretion. Positions 40–252 (DDFDTLDTRV…RVAFTAAGDE (213 aa)) constitute a GH16 domain. The Nucleophile role is filled by Glu-138. Catalysis depends on Glu-142, which acts as the Proton donor.

Belongs to the glycosyl hydrolase 16 family.

It localises to the secreted. The protein operates within glycan metabolism; exopolysaccharide biosynthesis. Cleaves high molecular weight succinoglycan to yield LMW succinoglycan. Dynamically regulates the molecular weight distribution of succinoglycan by cleaving nascent succinoglycan only during a limited period after its synthesis, perhaps before it undergoes a time-dependent change in its conformation or aggregation state. This is Endo-1,3-1,4-beta-glycanase ExoK (exoK) from Rhizobium meliloti (strain 1021) (Ensifer meliloti).